The sequence spans 356 residues: Arginine kinase Scy s 2 (356 aa).

Residues 9 to 91 (KLEEGFKKLE…FDPIIEDYHK (83 aa)) enclose the Phosphagen kinase N-terminal domain. 64–68 (GVGVY) is a binding site for L-arginine. One can recognise a Phosphagen kinase C-terminal domain in the interval 119–356 (FVISTRVRCG…LELIKMEKEM (238 aa)). ATP contacts are provided by residues 122–126 (STRVR) and histidine 185. Residue glutamate 225 participates in L-arginine binding. Residue arginine 229 coordinates ATP. Residue cysteine 271 coordinates L-arginine. ATP-binding positions include 280–284 (RASVH) and 309–314 (RGTRGE). Residue glutamate 314 coordinates L-arginine.

It belongs to the ATP:guanido phosphotransferase family. Muscle (at protein level).

It carries out the reaction L-arginine + ATP = N(omega)-phospho-L-arginine + ADP + H(+). In terms of biological role, catalyzes the reversible transfer of high energy ATP gamma-phosphate group to L-arginine. The protein is Arginine kinase Scy s 2 of Scylla serrata (Mud crab).